The sequence spans 528 residues: Phosphoenolpyruvate carboxykinase (ATP) (528 aa).

3 residues coordinate substrate: R56, Y192, and K198. Residues K198, H217, and 233 to 241 contribute to the ATP site; that span reads GLSGTGKTT. Mn(2+) contacts are provided by K198 and H217. Position 254 (D254) interacts with Mn(2+). Residues E282, R319, and T444 each contribute to the ATP site. Residue R319 participates in substrate binding.

Belongs to the phosphoenolpyruvate carboxykinase (ATP) family. Requires Mn(2+) as cofactor.

The protein resides in the cytoplasm. The catalysed reaction is oxaloacetate + ATP = phosphoenolpyruvate + ADP + CO2. Its pathway is carbohydrate biosynthesis; gluconeogenesis. Involved in the gluconeogenesis. Catalyzes the conversion of oxaloacetate (OAA) to phosphoenolpyruvate (PEP) through direct phosphoryl transfer between the nucleoside triphosphate and OAA. This is Phosphoenolpyruvate carboxykinase (ATP) from Geobacillus kaustophilus (strain HTA426).